A 345-amino-acid polypeptide reads, in one-letter code: Phosphoribosylformylglycinamidine cyclo-ligase (345 aa).

The protein belongs to the AIR synthase family.

The protein resides in the cytoplasm. It carries out the reaction 2-formamido-N(1)-(5-O-phospho-beta-D-ribosyl)acetamidine + ATP = 5-amino-1-(5-phospho-beta-D-ribosyl)imidazole + ADP + phosphate + H(+). The protein operates within purine metabolism; IMP biosynthesis via de novo pathway; 5-amino-1-(5-phospho-D-ribosyl)imidazole from N(2)-formyl-N(1)-(5-phospho-D-ribosyl)glycinamide: step 2/2. This Aeromonas salmonicida (strain A449) protein is Phosphoribosylformylglycinamidine cyclo-ligase.